A 263-amino-acid polypeptide reads, in one-letter code: HTH-type transcriptional repressor NanR (263 aa).

The region spanning 30–98 (KKLSEMVEEE…NGERARVSRP (69 aa)) is the HTH gntR-type domain. Residues 58 to 77 (ERELMAFFNVGRPSVREALA) constitute a DNA-binding region (H-T-H motif).

Belongs to the NanR family.

Transcriptional repressor that controls expression of the genes required for the catabolism of sialic acids. This chain is HTH-type transcriptional repressor NanR, found in Salmonella arizonae (strain ATCC BAA-731 / CDC346-86 / RSK2980).